The chain runs to 75 residues: Large ribosomal subunit protein bL28 (75 aa).

The interval 1 to 21 (MARVCQVTGKRPMSGNKRSHA) is disordered.

Belongs to the bacterial ribosomal protein bL28 family.

The polypeptide is Large ribosomal subunit protein bL28 (Blochmanniella pennsylvanica (strain BPEN)).